Consider the following 443-residue polypeptide: MSEMTPREIVSELDSYIIGQHKAKRAVSIALRNRWRRMQLDEALRHEVTPKNILMIGPTGVGKTEIARRLAKLANAPFIKVEATKFTEVGYVGKEVDSIIRDLTDSAIKMVRLQSIEKNRFRAEEMAEDRILDVLIPPAKNNWGQAESTPEPSAARQAFRKKLREGQLDDKEIEIDLAAAPVGVEIMAPPGMEEMTNQLQSMFQNLAGQKQKARKIKIKDAFKLLIEEEAAKLVNPEELKQQAIEAVEQHGIVFIDEIDKICKRGESSGPDVSREGVQRDLLPLVEGCTVSTKHGMVKTDHILFIASGAFQVASPSDLIPELQGRLPIRVELQALTTEDFERILTEPSASLTEQYKALMATEGVDISFTADGIRRIAEAAWQVNESTENIGARRLHTVMERLIEDVSYDASEMNGQSVTIDADYVRNHLDELVADEDLSRFIL.

Residues Ile-18, 60-65 (GVGKTE), Asp-256, Glu-321, and Arg-393 each bind ATP.

This sequence belongs to the ClpX chaperone family. HslU subfamily. In terms of assembly, a double ring-shaped homohexamer of HslV is capped on each side by a ring-shaped HslU homohexamer. The assembly of the HslU/HslV complex is dependent on binding of ATP.

It localises to the cytoplasm. In terms of biological role, ATPase subunit of a proteasome-like degradation complex; this subunit has chaperone activity. The binding of ATP and its subsequent hydrolysis by HslU are essential for unfolding of protein substrates subsequently hydrolyzed by HslV. HslU recognizes the N-terminal part of its protein substrates and unfolds these before they are guided to HslV for hydrolysis. This Pectobacterium carotovorum subsp. carotovorum (strain PC1) protein is ATP-dependent protease ATPase subunit HslU.